The chain runs to 96 residues: YcgL domain-containing protein Csal_1462 (96 aa).

Positions 4–88 (RLCEIFKSPR…ARESYLLDLY (85 aa)) constitute a YcgL domain.

This chain is YcgL domain-containing protein Csal_1462, found in Chromohalobacter salexigens (strain ATCC BAA-138 / DSM 3043 / CIP 106854 / NCIMB 13768 / 1H11).